A 391-amino-acid chain; its full sequence is 4-hydroxy-3-methylbut-2-en-1-yl diphosphate synthase (flavodoxin) (391 aa).

Residues Cys-282, Cys-285, Cys-317, and Glu-324 each contribute to the [4Fe-4S] cluster site.

The protein belongs to the IspG family. Requires [4Fe-4S] cluster as cofactor.

It carries out the reaction (2E)-4-hydroxy-3-methylbut-2-enyl diphosphate + oxidized [flavodoxin] + H2O + 2 H(+) = 2-C-methyl-D-erythritol 2,4-cyclic diphosphate + reduced [flavodoxin]. It functions in the pathway isoprenoid biosynthesis; isopentenyl diphosphate biosynthesis via DXP pathway; isopentenyl diphosphate from 1-deoxy-D-xylulose 5-phosphate: step 5/6. Converts 2C-methyl-D-erythritol 2,4-cyclodiphosphate (ME-2,4cPP) into 1-hydroxy-2-methyl-2-(E)-butenyl 4-diphosphate. The polypeptide is 4-hydroxy-3-methylbut-2-en-1-yl diphosphate synthase (flavodoxin) (Acidothermus cellulolyticus (strain ATCC 43068 / DSM 8971 / 11B)).